Here is a 244-residue protein sequence, read N- to C-terminus: 1-(5-phosphoribosyl)-5-[(5-phosphoribosylamino)methylideneamino] imidazole-4-carboxamide isomerase (244 aa).

Asp10 serves as the catalytic Proton acceptor. Asp132 serves as the catalytic Proton donor.

This sequence belongs to the HisA/HisF family.

It is found in the cytoplasm. It carries out the reaction 1-(5-phospho-beta-D-ribosyl)-5-[(5-phospho-beta-D-ribosylamino)methylideneamino]imidazole-4-carboxamide = 5-[(5-phospho-1-deoxy-D-ribulos-1-ylimino)methylamino]-1-(5-phospho-beta-D-ribosyl)imidazole-4-carboxamide. It participates in amino-acid biosynthesis; L-histidine biosynthesis; L-histidine from 5-phospho-alpha-D-ribose 1-diphosphate: step 4/9. The sequence is that of 1-(5-phosphoribosyl)-5-[(5-phosphoribosylamino)methylideneamino] imidazole-4-carboxamide isomerase from Xanthomonas oryzae pv. oryzae (strain MAFF 311018).